Consider the following 436-residue polypeptide: MEGDELTQNIEQWKIKRLIDNLDKARGNGTSLISLIIPPREQLPIINKMITEEYGKSSNIKSRIVRQAVQSALTSTKERLKLYNNRLPANGLILYCGEVINEEGVCEKKYTIDFQPYRAINTTLYICDNKFHTQPLKDLLVMDDKFGFIIIDGNGTLFGTLQGNTKEVLHKFSVDLPKKHRRGGQSALRFARLRMESRNNYLRKVAEQAVVQFISSDKVNVAGLIIAGSAEFKNVLVQSDLFDQRLAAKVLKIVDVAYGGENGFTQAIELSADTLSNIKFIREKKVMSKFFEEVAQDTKKYCYGVEDTMKSLLMGAVEVILLFENLNFTRYVLKNPTTGIEKTLYLTPEQEENHDNFIENGEELEALEKGPLPEWIVDNYMKFGAGLEFITDRSQEGAQFVRGFGGLGAFLRYQVDMAHLNAGEEELDEEWDDDFM.

It belongs to the eukaryotic release factor 1 family. Heterodimer of two subunits, one of which binds GTP.

The protein resides in the cytoplasm. Functionally, directs the termination of nascent peptide synthesis (translation) in response to the termination codons UAA and UAG. In B.americanum UGA codes for tryptophan. The chain is Eukaryotic peptide chain release factor subunit 1 (eRF1) from Blepharisma americanum (Ciliate).